The following is a 301-amino-acid chain: Protoheme IX farnesyltransferase 1 (301 aa).

The next 9 helical transmembrane spans lie at 29–49 (VVAL…PHAV), 51–71 (VQPL…AAAL), 101–121 (ALIF…SLVN), 123–143 (LTAW…TAYL), 150–170 (NIVI…TAVT), 177–197 (ALLL…ALAI), 223–243 (CILL…LVGM), 244–264 (CGPV…YKAW), and 275–295 (AMQV…ALLL).

It belongs to the UbiA prenyltransferase family. Protoheme IX farnesyltransferase subfamily.

It localises to the cell inner membrane. The enzyme catalyses heme b + (2E,6E)-farnesyl diphosphate + H2O = Fe(II)-heme o + diphosphate. It functions in the pathway porphyrin-containing compound metabolism; heme O biosynthesis; heme O from protoheme: step 1/1. Converts heme B (protoheme IX) to heme O by substitution of the vinyl group on carbon 2 of heme B porphyrin ring with a hydroxyethyl farnesyl side group. This chain is Protoheme IX farnesyltransferase 1, found in Shewanella baltica (strain OS185).